A 504-amino-acid polypeptide reads, in one-letter code: Aspartyl/glutamyl-tRNA(Asn/Gln) amidotransferase subunit B (504 aa).

It belongs to the GatB/GatE family. GatB subfamily. As to quaternary structure, heterotrimer of A, B and C subunits.

It carries out the reaction L-glutamyl-tRNA(Gln) + L-glutamine + ATP + H2O = L-glutaminyl-tRNA(Gln) + L-glutamate + ADP + phosphate + H(+). The enzyme catalyses L-aspartyl-tRNA(Asn) + L-glutamine + ATP + H2O = L-asparaginyl-tRNA(Asn) + L-glutamate + ADP + phosphate + 2 H(+). Its function is as follows. Allows the formation of correctly charged Asn-tRNA(Asn) or Gln-tRNA(Gln) through the transamidation of misacylated Asp-tRNA(Asn) or Glu-tRNA(Gln) in organisms which lack either or both of asparaginyl-tRNA or glutaminyl-tRNA synthetases. The reaction takes place in the presence of glutamine and ATP through an activated phospho-Asp-tRNA(Asn) or phospho-Glu-tRNA(Gln). This is Aspartyl/glutamyl-tRNA(Asn/Gln) amidotransferase subunit B from Rhodococcus opacus (strain B4).